Here is a 381-residue protein sequence, read N- to C-terminus: Complement decay-accelerating factor (381 aa).

A signal peptide spans 1-34; sequence MTVARPSVPAALPLLGELPRLLLLVLLCLPAVWG. Sushi domains lie at 35 to 96, 96 to 160, 161 to 222, and 223 to 285; these read DCGL…FCNR, RSCE…FCKK, KSCP…ECRE, and IYCP…ECRG. Disulfide bonds link Cys36–Cys81 and Cys65–Cys94. The N-linked (GlcNAc...) asparagine glycan is linked to Asn95. Cystine bridges form between Cys98–Cys145, Cys129–Cys158, Cys163–Cys204, Cys190–Cys220, Cys225–Cys267, and Cys253–Cys283. The tract at residues 277 to 354 is disordered; that stretch reads SGPPPECRGK…PNKGSGTTSG (78 aa). Positions 287–309 are enriched in polar residues; it reads SLTSKVPPTVQKPTTVNVPTTEV. Residues 310–328 are compositionally biased toward low complexity; the sequence is SPTSQKTTTKTTTPNAQAT. A lipid anchor (GPI-anchor amidated serine) is attached at Ser353. Positions 354 to 381 are cleaved as a propeptide — removed in mature form; the sequence is GTTRLLSGHTCFTLTGLLGTLVTMGLLT.

It belongs to the receptors of complement activation (RCA) family. Monomer (major form) and non-disulfide-linked, covalent homodimer (minor form). Interacts with ADGRE5. As to quaternary structure, (Microbial infection) Interacts with coxsackievirus A21, coxsackieviruses B1, B3 and B5 capsid proteins. In terms of assembly, (Microbial infection) Interacts with human enterovirus 70 and D68 capsid proteins. (Microbial infection) Interacts with human echoviruses 6, 7, 11, 12, 20 and 21 capsid proteins. In terms of processing, the Ser/Thr-rich domain is heavily O-glycosylated. In terms of tissue distribution, expressed on the plasma membranes of all cell types that are in intimate contact with plasma complement proteins. It is also found on the surfaces of epithelial cells lining extracellular compartments, and variants of the molecule are present in body fluids and in extracellular matrix.

It is found in the cell membrane. The protein localises to the secreted. In terms of biological role, this protein recognizes C4b and C3b fragments that condense with cell-surface hydroxyl or amino groups when nascent C4b and C3b are locally generated during C4 and c3 activation. Interaction of daf with cell-associated C4b and C3b polypeptides interferes with their ability to catalyze the conversion of C2 and factor B to enzymatically active C2a and Bb and thereby prevents the formation of C4b2a and C3bBb, the amplification convertases of the complement cascade. Inhibits complement activation by destabilizing and preventing the formation of C3 and C5 convertases, which prevents complement damage. Functionally, (Microbial infection) Acts as a receptor for Coxsackievirus A21, coxsackieviruses B1, B3 and B5. Its function is as follows. (Microbial infection) Acts as a receptor for Human enterovirus 70 and D68. (Microbial infection) Acts as a receptor for Human echoviruses 6, 7, 11, 12, 20 and 21. The chain is Complement decay-accelerating factor (CD55) from Homo sapiens (Human).